Reading from the N-terminus, the 430-residue chain is Trigger factor (430 aa).

Residues 157 to 242 (GDLVALETWS…AVEVSEPVLP (86 aa)) form the PPIase FKBP-type domain.

This sequence belongs to the FKBP-type PPIase family. Tig subfamily.

It is found in the cytoplasm. It catalyses the reaction [protein]-peptidylproline (omega=180) = [protein]-peptidylproline (omega=0). In terms of biological role, involved in protein export. Acts as a chaperone by maintaining the newly synthesized protein in an open conformation. Functions as a peptidyl-prolyl cis-trans isomerase. The sequence is that of Trigger factor from Xanthomonas oryzae pv. oryzae (strain PXO99A).